Here is a 242-residue protein sequence, read N- to C-terminus: ATP synthase subunit a (242 aa).

6 consecutive transmembrane segments (helical) span residues 29 to 49 (SAVA…TAFV), 84 to 104 (FFPL…LGMV), 114 to 134 (IIVT…YGIY), 140 to 160 (FFSL…MVII), 181 to 201 (VAGH…TWLF), and 206 to 226 (IALV…QAYI).

Belongs to the ATPase A chain family. In terms of assembly, F-type ATPases have 2 components, CF(1) - the catalytic core - and CF(0) - the membrane proton channel. CF(1) has five subunits: alpha(3), beta(3), gamma(1), delta(1), epsilon(1). CF(0) has three main subunits: a(1), b(2) and c(9-12). The alpha and beta chains form an alternating ring which encloses part of the gamma chain. CF(1) is attached to CF(0) by a central stalk formed by the gamma and epsilon chains, while a peripheral stalk is formed by the delta and b chains.

The protein resides in the cell inner membrane. In terms of biological role, key component of the proton channel; it plays a direct role in the translocation of protons across the membrane. This is ATP synthase subunit a from Orientia tsutsugamushi (strain Ikeda) (Rickettsia tsutsugamushi).